A 101-amino-acid chain; its full sequence is Putative pterin-4-alpha-carbinolamine dehydratase (101 aa).

The protein belongs to the pterin-4-alpha-carbinolamine dehydratase family.

The catalysed reaction is (4aS,6R)-4a-hydroxy-L-erythro-5,6,7,8-tetrahydrobiopterin = (6R)-L-erythro-6,7-dihydrobiopterin + H2O. In Rhizobium etli (strain ATCC 51251 / DSM 11541 / JCM 21823 / NBRC 15573 / CFN 42), this protein is Putative pterin-4-alpha-carbinolamine dehydratase.